The following is a 348-amino-acid chain: Lipoyl synthase, mitochondrial (348 aa).

6 residues coordinate [4Fe-4S] cluster: C105, C110, C116, C136, C140, and C143. The Radical SAM core domain occupies E121 to L341.

This sequence belongs to the radical SAM superfamily. Lipoyl synthase family. It depends on [4Fe-4S] cluster as a cofactor.

It is found in the mitochondrion. It catalyses the reaction [[Fe-S] cluster scaffold protein carrying a second [4Fe-4S](2+) cluster] + N(6)-octanoyl-L-lysyl-[protein] + 2 oxidized [2Fe-2S]-[ferredoxin] + 2 S-adenosyl-L-methionine + 4 H(+) = [[Fe-S] cluster scaffold protein] + N(6)-[(R)-dihydrolipoyl]-L-lysyl-[protein] + 4 Fe(3+) + 2 hydrogen sulfide + 2 5'-deoxyadenosine + 2 L-methionine + 2 reduced [2Fe-2S]-[ferredoxin]. The protein operates within protein modification; protein lipoylation via endogenous pathway; protein N(6)-(lipoyl)lysine from octanoyl-[acyl-carrier-protein]: step 2/2. Functionally, catalyzes the radical-mediated insertion of two sulfur atoms into the C-6 and C-8 positions of the octanoyl moiety bound to the lipoyl domains of lipoate-dependent enzymes, thereby converting the octanoylated domains into lipoylated derivatives. The polypeptide is Lipoyl synthase, mitochondrial (LIP1) (Ricinus communis (Castor bean)).